The following is a 472-amino-acid chain: D-inositol 3-phosphate glycosyltransferase (472 aa).

H48 serves as a coordination point for 1D-myo-inositol 3-phosphate. Residues 54–55 (QP) and G62 each bind UDP-N-acetyl-alpha-D-glucosamine. 1D-myo-inositol 3-phosphate-binding positions include 59–64 (DAGGMN), K117, Y150, T174, and R194. UDP-N-acetyl-alpha-D-glucosamine-binding residues include R282, K287, and V348. Residues F357, R358, and A360 each contribute to the Mg(2+) site. UDP-N-acetyl-alpha-D-glucosamine contacts are provided by E370 and E378. T384 lines the Mg(2+) pocket.

Belongs to the glycosyltransferase group 1 family. MshA subfamily. In terms of assembly, homodimer.

It catalyses the reaction 1D-myo-inositol 3-phosphate + UDP-N-acetyl-alpha-D-glucosamine = 1D-myo-inositol 2-acetamido-2-deoxy-alpha-D-glucopyranoside 3-phosphate + UDP + H(+). In terms of biological role, catalyzes the transfer of a N-acetyl-glucosamine moiety to 1D-myo-inositol 3-phosphate to produce 1D-myo-inositol 2-acetamido-2-deoxy-glucopyranoside 3-phosphate in the mycothiol biosynthesis pathway. The polypeptide is D-inositol 3-phosphate glycosyltransferase (Streptomyces griseus subsp. griseus (strain JCM 4626 / CBS 651.72 / NBRC 13350 / KCC S-0626 / ISP 5235)).